The chain runs to 256 residues: Thiazole synthase (256 aa).

The active-site Schiff-base intermediate with DXP is the K102. 1-deoxy-D-xylulose 5-phosphate is bound by residues G163, 189–190 (AG), and 211–212 (AT).

The protein belongs to the ThiG family. As to quaternary structure, homotetramer. Forms heterodimers with either ThiH or ThiS.

Its subcellular location is the cytoplasm. It catalyses the reaction [ThiS sulfur-carrier protein]-C-terminal-Gly-aminoethanethioate + 2-iminoacetate + 1-deoxy-D-xylulose 5-phosphate = [ThiS sulfur-carrier protein]-C-terminal Gly-Gly + 2-[(2R,5Z)-2-carboxy-4-methylthiazol-5(2H)-ylidene]ethyl phosphate + 2 H2O + H(+). The protein operates within cofactor biosynthesis; thiamine diphosphate biosynthesis. Functionally, catalyzes the rearrangement of 1-deoxy-D-xylulose 5-phosphate (DXP) to produce the thiazole phosphate moiety of thiamine. Sulfur is provided by the thiocarboxylate moiety of the carrier protein ThiS. In vitro, sulfur can be provided by H(2)S. The polypeptide is Thiazole synthase (Nocardia farcinica (strain IFM 10152)).